The sequence spans 747 residues: Histone-lysine N-methyltransferase EZH1 (747 aa).

The segment at 186 to 229 (YSDEDEEGHNDTSDGKQDDSKEDLPVTRKRKRHAIEGSKKSSKK) is disordered. The span at 194 to 211 (HNDTSDGKQDDSKEDLPV) shows a compositional bias: basic and acidic residues. K327 participates in a covalent cross-link: Glycyl lysine isopeptide (Lys-Gly) (interchain with G-Cter in SUMO2). The interval 375–421 (TSASAVAETKEGDSDRDTGNDWASSSSEANSRCQTPTKQKASPAPPQ) is disordered. The segment covering 382–393 (ETKEGDSDRDTG) has biased composition (basic and acidic residues). Polar residues predominate over residues 395–414 (DWASSSSEANSRCQTPTKQK). The CXC domain occupies 504 to 606 (CRKIQLKKDN…CKVVSCKNCS (103 aa)). Residues 613–728 (KHLLLAPSDV…AGEELFFDYR (116 aa)) enclose the SET domain.

Belongs to the class V-like SAM-binding methyltransferase superfamily. Histone-lysine methyltransferase family. EZ subfamily. Component of the PRC2/EED-EZH1 complex, which includes EED, EZH1, SUZ12, RBBP4 and AEBP2. The PRC2/EED-EZH1 is less abundant than the PRC2/EED-EZH2 complex, has weak methyltransferase activity and compacts chromatin in the absence of the methyltransferase cofactor S-adenosyl-L-methionine (SAM). Interacts with EZHIP; the interaction blocks EZH1 methyltransferase activity.

It is found in the nucleus. The enzyme catalyses L-lysyl(27)-[histone H3] + 3 S-adenosyl-L-methionine = N(6),N(6),N(6)-trimethyl-L-lysyl(27)-[histone H3] + 3 S-adenosyl-L-homocysteine + 3 H(+). Functionally, polycomb group (PcG) protein. Catalytic subunit of the PRC2/EED-EZH1 complex, which methylates 'Lys-27' of histone H3, leading to transcriptional repression of the affected target gene. Able to mono-, di- and trimethylate 'Lys-27' of histone H3 to form H3K27me1, H3K27me2 and H3K27me3, respectively. Required for embryonic stem cell derivation and self-renewal, suggesting that it is involved in safeguarding embryonic stem cell identity. Compared to EZH2-containing complexes, it is less abundant in embryonic stem cells, has weak methyltransferase activity and plays a less critical role in forming H3K27me3, which is required for embryonic stem cell identity and proper differentiation. This is Histone-lysine N-methyltransferase EZH1 (EZH1) from Bos taurus (Bovine).